Here is a 188-residue protein sequence, read N- to C-terminus: ADP-ribosylation factor J (188 aa).

GTP-binding positions include 34 to 40 (DGAGKST), 75 to 79 (DVGGQ), and 134 to 137 (NKQD).

It belongs to the small GTPase superfamily. Arf family.

The protein resides in the golgi apparatus. Functionally, GTP-binding protein that may be involved in protein trafficking. May modulate vesicle budding and uncoating within the Golgi apparatus. The chain is ADP-ribosylation factor J (arrJ) from Dictyostelium discoideum (Social amoeba).